We begin with the raw amino-acid sequence, 251 residues long: MSEHVYNLVKKHHSVRKFKNKPLSEDVVKKLVEAGQSASTSSFLQAYSIIGIDDEKIKENLREVSGQPYVVENGYLFVFVIDYYRHHLVDQHAETDMENAYGSTEGLLVGAIDAALVAENIAVTAEDMGYGIVFLGSLRNDVERVREILDLPDYVFPVFGMAVGEPADDENGAAKPRLPFDHVFHHNKYHADKETQYAQMADYDQTISEYYNQRTNGNRKETWSQQIEMFLGNKARLDMLEQLQKSGLIQR.

The protein belongs to the flavin oxidoreductase frp family. FMN serves as cofactor.

In terms of biological role, reduces FMN, organic nitro compounds and disulfide DTNB. Involved in maintenance of the cellular redox state and the disulfide stress response. This Staphylococcus aureus (strain MSSA476) protein is NADPH-dependent oxidoreductase (nfrA).